The sequence spans 374 residues: Erythronate-4-phosphate dehydrogenase (374 aa).

Substrate-binding residues include Ser-45 and Thr-67. Asp-147 is a binding site for NAD(+). Residue Arg-208 is part of the active site. An NAD(+)-binding site is contributed by Asp-232. Residue Glu-237 is part of the active site. Residue His-254 is the Proton donor of the active site. Gly-257 contacts NAD(+).

The protein belongs to the D-isomer specific 2-hydroxyacid dehydrogenase family. PdxB subfamily. In terms of assembly, homodimer.

It is found in the cytoplasm. The enzyme catalyses 4-phospho-D-erythronate + NAD(+) = (R)-3-hydroxy-2-oxo-4-phosphooxybutanoate + NADH + H(+). Its pathway is cofactor biosynthesis; pyridoxine 5'-phosphate biosynthesis; pyridoxine 5'-phosphate from D-erythrose 4-phosphate: step 2/5. Its function is as follows. Catalyzes the oxidation of erythronate-4-phosphate to 3-hydroxy-2-oxo-4-phosphonooxybutanoate. The protein is Erythronate-4-phosphate dehydrogenase of Pseudoalteromonas atlantica (strain T6c / ATCC BAA-1087).